The sequence spans 132 residues: UPF0299 membrane protein YohJ (132 aa).

The next 4 helical transmembrane spans lie at 7-27 (IIWQ…AGIF), 31-51 (LLPV…VLLA), 63-83 (GCYV…VGVM), and 93-113 (FGPV…VVSW).

The protein belongs to the UPF0299 family.

The protein resides in the cell inner membrane. This Shigella boydii serotype 18 (strain CDC 3083-94 / BS512) protein is UPF0299 membrane protein YohJ.